Consider the following 391-residue polypeptide: Pyoverdine export membrane fusion protein PvdR (391 aa).

A signal peptide spans 1–24 (MRRTRSTRRALLVAVCLSPLIALA). The stretch at 108–180 (IEMLKAQLAE…QASLRSDEAE (73 aa)) forms a coiled coil. A disordered region spans residues 263 to 289 (LPVPPKPLDQSNQGGGSPTSGSGGQSG). Residues 275–289 (QGGGSPTSGSGGQSG) are compositionally biased toward gly residues.

It belongs to the membrane fusion protein (MFP) (TC 8.A.1) family. In terms of assembly, part of the tripartite efflux system PvdRT-OpmQ, which is composed of an inner membrane component with both ATPase and permease domains, PvdT, a periplasmic membrane fusion protein, PvdR, and an outer membrane component, OpmQ.

It localises to the periplasm. Part of the tripartite efflux system PvdRT-OpmQ required for the secretion into the extracellular milieu of the siderophore pyoverdine (PVD), which is involved in iron acquisition. This subunit is an adapter protein that stimulates the ATPase activity of PvdT and connects the inner and outer membrane components. The system is responsible for export of newly synthesized PVD after the final steps of biosynthesis have taken place in the periplasm. It is also responsible for recycling of PVD after internalization of ferri-PVD into the periplasm by the outer-membrane receptor FpvA and release of iron from PVD, thus making PVD available for new cycles of iron uptake. In addition, can expel unwanted metals complexed with PVD from the periplasm into the extracellular medium. Does not contribute to resistance to antibiotics belonging to the classes of tetracyclines, aminoglycosides, beta-lactams and macrolides, and chloramphenicol. The chain is Pyoverdine export membrane fusion protein PvdR from Pseudomonas aeruginosa (strain ATCC 15692 / DSM 22644 / CIP 104116 / JCM 14847 / LMG 12228 / 1C / PRS 101 / PAO1).